We begin with the raw amino-acid sequence, 251 residues long: 2,3-bisphosphoglycerate-dependent phosphoglycerate mutase (251 aa).

Substrate is bound by residues 11–18, 24–25, Arg-63, 90–93, Lys-101, 117–118, and 185–186; these read RHGNSDWN, TG, ERHY, RR, and GN. His-12 (tele-phosphohistidine intermediate) is an active-site residue. Catalysis depends on Glu-90, which acts as the Proton donor/acceptor. The disordered stretch occupies residues 117–142; sequence RRSFDVPPPPIDDDDEYSQSRDPRYA.

This sequence belongs to the phosphoglycerate mutase family. BPG-dependent PGAM subfamily.

It carries out the reaction (2R)-2-phosphoglycerate = (2R)-3-phosphoglycerate. It participates in carbohydrate degradation; glycolysis; pyruvate from D-glyceraldehyde 3-phosphate: step 3/5. Its function is as follows. Catalyzes the interconversion of 2-phosphoglycerate and 3-phosphoglycerate. This is 2,3-bisphosphoglycerate-dependent phosphoglycerate mutase from Clavibacter michiganensis subsp. michiganensis (strain NCPPB 382).